The primary structure comprises 114 residues: Adapter SH3BGRL (114 aa).

The required for interaction with HER2 stretch occupies residues 13-50 (SMAIKKKQQDVLGFLEANKIGFEEKDIAANEENRKWMR). Residues 54–71 (PENSRPATGYPLPPQIFN) are required for interaction with PFN1, HER2, and ATG12. An SH3-binding motif is present at residues 61–67 (TGYPLPP).

This sequence belongs to the SH3BGR family. Monomer. Interacts with PFN1/Profilin-1. Interacts with ERBB2. Interacts with ATG12. Interacts with BECN1. Interacts with translating ribosomes.

It localises to the cytoplasm. Its subcellular location is the cytosol. The protein resides in the cell membrane. Appears to function as an adapter protein that bridges proteins together or proteins with mRNAs. May function as a ubiquitin ligase-substrate adapter. Additionally, associates with translating cytoplasmic ribosomes and may promote the expression of specific mRNAs. This chain is Adapter SH3BGRL (SH3BGRL), found in Bos taurus (Bovine).